A 103-amino-acid polypeptide reads, in one-letter code: MYAIIETGGKQYRVREGDTLYVEKLPAGAGETVEADRVLAVIKDGEVMIGTPSVENAKVFLKVERHGRGKKIIVYKYKPKKNYRRKKGHRQPFSRVTVEKIEA.

The segment covering 83–92 (YRRKKGHRQP) has biased composition (basic residues). Positions 83 to 103 (YRRKKGHRQPFSRVTVEKIEA) are disordered.

The protein belongs to the bacterial ribosomal protein bL21 family. Part of the 50S ribosomal subunit. Contacts protein L20.

This protein binds to 23S rRNA in the presence of protein L20. The chain is Large ribosomal subunit protein bL21 from Pelotomaculum thermopropionicum (strain DSM 13744 / JCM 10971 / SI).